The following is a 312-amino-acid chain: DNA-directed RNA polymerase subunit alpha (312 aa).

Residues 1–226 (MIEFEKPIIT…EHLNLFTDLT (226 aa)) form an alpha N-terminal domain (alpha-NTD) region. The interval 243–312 (DEKVLDRTIE…DLGLGLKNDK (70 aa)) is alpha C-terminal domain (alpha-CTD).

The protein belongs to the RNA polymerase alpha chain family. In terms of assembly, homodimer. The RNAP catalytic core consists of 2 alpha, 1 beta, 1 beta' and 1 omega subunit. When a sigma factor is associated with the core the holoenzyme is formed, which can initiate transcription.

It catalyses the reaction RNA(n) + a ribonucleoside 5'-triphosphate = RNA(n+1) + diphosphate. In terms of biological role, DNA-dependent RNA polymerase catalyzes the transcription of DNA into RNA using the four ribonucleoside triphosphates as substrates. The sequence is that of DNA-directed RNA polymerase subunit alpha from Streptococcus pyogenes serotype M3 (strain ATCC BAA-595 / MGAS315).